The primary structure comprises 638 residues: UvrABC system protein C (638 aa).

A GIY-YIG domain is found at Glu20–Ile97. Residues Lys209 to Val244 form the UVR domain.

Belongs to the UvrC family. In terms of assembly, interacts with UvrB in an incision complex.

The protein localises to the cytoplasm. In terms of biological role, the UvrABC repair system catalyzes the recognition and processing of DNA lesions. UvrC both incises the 5' and 3' sides of the lesion. The N-terminal half is responsible for the 3' incision and the C-terminal half is responsible for the 5' incision. The chain is UvrABC system protein C from Rickettsia canadensis (strain McKiel).